The chain runs to 100 residues: Toxin ParE3 (100 aa).

It belongs to the RelE toxin family.

Toxic component of a type II toxin-antitoxin (TA) system. Its toxic effect is neutralized by coexpression with cognate antitoxin ParD3 but no other ParD or RelB antitoxin. This is Toxin ParE3 (parE3) from Caulobacter vibrioides (strain ATCC 19089 / CIP 103742 / CB 15) (Caulobacter crescentus).